The primary structure comprises 425 residues: Enolase (425 aa).

Q162 is a (2R)-2-phosphoglycerate binding site. E204 (proton donor) is an active-site residue. D241, E282, and D309 together coordinate Mg(2+). Residues K334, R363, S364, and K385 each coordinate (2R)-2-phosphoglycerate. The active-site Proton acceptor is K334.

Belongs to the enolase family. The cofactor is Mg(2+).

The protein resides in the cytoplasm. The protein localises to the secreted. Its subcellular location is the cell surface. It catalyses the reaction (2R)-2-phosphoglycerate = phosphoenolpyruvate + H2O. It participates in carbohydrate degradation; glycolysis; pyruvate from D-glyceraldehyde 3-phosphate: step 4/5. Its function is as follows. Catalyzes the reversible conversion of 2-phosphoglycerate (2-PG) into phosphoenolpyruvate (PEP). It is essential for the degradation of carbohydrates via glycolysis. This chain is Enolase, found in Corynebacterium diphtheriae (strain ATCC 700971 / NCTC 13129 / Biotype gravis).